A 612-amino-acid polypeptide reads, in one-letter code: Dihydroxy-acid dehydratase (612 aa).

Aspartate 81 is a binding site for Mg(2+). A [2Fe-2S] cluster-binding site is contributed by cysteine 122. Positions 123 and 124 each coordinate Mg(2+). Residue lysine 124 is modified to N6-carboxylysine. Residue cysteine 193 coordinates [2Fe-2S] cluster. A Mg(2+)-binding site is contributed by glutamate 489. The Proton acceptor role is filled by serine 515.

Belongs to the IlvD/Edd family. As to quaternary structure, homodimer. [2Fe-2S] cluster is required as a cofactor. Requires Mg(2+) as cofactor.

The catalysed reaction is (2R)-2,3-dihydroxy-3-methylbutanoate = 3-methyl-2-oxobutanoate + H2O. It catalyses the reaction (2R,3R)-2,3-dihydroxy-3-methylpentanoate = (S)-3-methyl-2-oxopentanoate + H2O. Its pathway is amino-acid biosynthesis; L-isoleucine biosynthesis; L-isoleucine from 2-oxobutanoate: step 3/4. It functions in the pathway amino-acid biosynthesis; L-valine biosynthesis; L-valine from pyruvate: step 3/4. Its function is as follows. Functions in the biosynthesis of branched-chain amino acids. Catalyzes the dehydration of (2R,3R)-2,3-dihydroxy-3-methylpentanoate (2,3-dihydroxy-3-methylvalerate) into 2-oxo-3-methylpentanoate (2-oxo-3-methylvalerate) and of (2R)-2,3-dihydroxy-3-methylbutanoate (2,3-dihydroxyisovalerate) into 2-oxo-3-methylbutanoate (2-oxoisovalerate), the penultimate precursor to L-isoleucine and L-valine, respectively. The sequence is that of Dihydroxy-acid dehydratase from Xanthomonas campestris pv. campestris (strain B100).